Reading from the N-terminus, the 245-residue chain is MIIPSLDFIHGKIVRLYQGNYNNKISYKKDIFKQIEKYIYQGATYIHLVDLDGCNNPENRQKSMFNIFSNFKNVSFQVGGGIRSKRDIENLFHAGVSKIVIGTSAILYPNKFKKWLKNYGSKNFVLSVDININTKKENKIAIQGWKKTTEINLDDAIKQFIPYGLKNILCTDISRDGTFSGPNISLYKYLKNKFPNIVLQSSGGINSISDIYNLKKNNVEHVIVGRALLENKFTFLEASKCWLKE.

D7 serves as the catalytic Proton acceptor. D129 acts as the Proton donor in catalysis.

Belongs to the HisA/HisF family.

The protein resides in the cytoplasm. The enzyme catalyses 1-(5-phospho-beta-D-ribosyl)-5-[(5-phospho-beta-D-ribosylamino)methylideneamino]imidazole-4-carboxamide = 5-[(5-phospho-1-deoxy-D-ribulos-1-ylimino)methylamino]-1-(5-phospho-beta-D-ribosyl)imidazole-4-carboxamide. The protein operates within amino-acid biosynthesis; L-histidine biosynthesis; L-histidine from 5-phospho-alpha-D-ribose 1-diphosphate: step 4/9. The chain is 1-(5-phosphoribosyl)-5-[(5-phosphoribosylamino)methylideneamino] imidazole-4-carboxamide isomerase from Buchnera aphidicola subsp. Cinara cedri (strain Cc).